The sequence spans 871 residues: CRISPR system Cmr subunit Cmr2 (871 aa).

A not required for target RNA cleavage region spans residues 1–215 (MVNIKEKLFV…THLDLTSALS (215 aa)). Mn(2+) contacts are provided by His13, Asp14, and His25. Residues Cys448, Cys451, Cys478, and Cys481 each contribute to the Zn(2+) site. Residues 592–752 (KYYAILVMDG…GKDTLAIGLL (161 aa)) form the GGDEF domain. Positions 600, 656, 673, 674, 694, and 700 each coordinate Mn(2+).

The protein belongs to the CRISPR system Cmr2 family. Part of the type III-B Cmr ribonucleoprotein (RNP) complex, an elongated RNP with Cmr2 and Cmr3 as the base, with Cmr4 and Cmr5 forming a helical core along the mature crRNA (39 or 45 nt in length), while the complex is capped by Cmr6 and Cmr1. The 5' end of the crRNA is bound to Cmr2 and Cmr3, while Cmr6 and a Cmr1 subunit (Cmr1-1 or Cmr1-2) cap the 3' end of the crRNA. The target RNA lies antiparallel to the crRNA, with its 5' end near Cmr1 and Cmr6 and its 3' end near Cmr2 and Cmr3; major target cleavage occurs nears the junction of Cmr1/Cmr6 and Cmr4/Cmr, with minor cleavage occurring at 6 nt intervals which coincide with the proposed spacing of Cmr4 subunits. Forms a 1:1 complex with Cmr3. The Cmr2-Cmr3 complex non-specifically binds ss-target RNA and crRNA. Interacts with Cmr3, Cmr4 and Cmr5. Ca(2+) serves as cofactor. The cofactor is Mn(2+). It depends on Zn(2+) as a cofactor.

The protein localises to the cytoplasm. Its function is as follows. CRISPR (clustered regularly interspaced short palindromic repeat), is an adaptive immune system that provides protection against mobile genetic elements (viruses, transposable elements and conjugative plasmids). CRISPR clusters contain sequences complementary to antecedent mobile elements and target invading nucleic acids. CRISPR clusters are transcribed and processed into CRISPR RNA (crRNA), formerly called psiRNA (prokaryotic silencing) in this organism. Part of the Cmr ribonucleoprotein complex which has divalent cation-dependent endoribonuclease activity specific for ssRNA complementary to the crRNA (target RNA), generating 5' hydroxy- and 3' phosphate or 2'-3' cyclic phosphate termini. Cmr4 is probably the subunit that cleaves target RNA. Cmr complex does not cleave ssDNA complementary to the crRNA. Cleavage of target RNA is guided by the crRNA; substrate cleavage occurs a fixed distance (14 nt) from the 3' end of the crRNA. In vitro reconstitution shows Cmr1-2 and Cmr5 are not absolutely necessary for target cleavage. In Pyrococcus furiosus (strain ATCC 43587 / DSM 3638 / JCM 8422 / Vc1), this protein is CRISPR system Cmr subunit Cmr2.